A 483-amino-acid polypeptide reads, in one-letter code: Regulatory protein ViaA (483 aa).

The protein belongs to the ViaA family. As to quaternary structure, homodimer. Interacts with RavA.

It localises to the cytoplasm. In terms of biological role, component of the RavA-ViaA chaperone complex, which may act on the membrane to optimize the function of some of the respiratory chains. ViaA stimulates the ATPase activity of RavA. The protein is Regulatory protein ViaA of Shigella flexneri serotype 5b (strain 8401).